The sequence spans 339 residues: Glycerol-3-phosphate dehydrogenase [NAD(P)+] (339 aa).

Residues Ser15, Trp16, His36, and Lys110 each contribute to the NADPH site. Residues Lys110, Gly144, and Ser146 each coordinate sn-glycerol 3-phosphate. Ala148 serves as a coordination point for NADPH. Residues Lys199, Asp252, Ser262, Arg263, and Asn264 each coordinate sn-glycerol 3-phosphate. Lys199 serves as the catalytic Proton acceptor. Arg263 lines the NADPH pocket. The NADPH site is built by Val287 and Glu289.

This sequence belongs to the NAD-dependent glycerol-3-phosphate dehydrogenase family.

It is found in the cytoplasm. It carries out the reaction sn-glycerol 3-phosphate + NAD(+) = dihydroxyacetone phosphate + NADH + H(+). It catalyses the reaction sn-glycerol 3-phosphate + NADP(+) = dihydroxyacetone phosphate + NADPH + H(+). The protein operates within membrane lipid metabolism; glycerophospholipid metabolism. Its function is as follows. Catalyzes the reduction of the glycolytic intermediate dihydroxyacetone phosphate (DHAP) to sn-glycerol 3-phosphate (G3P), the key precursor for phospholipid synthesis. The sequence is that of Glycerol-3-phosphate dehydrogenase [NAD(P)+] from Desulfotalea psychrophila (strain LSv54 / DSM 12343).